Here is a 605-residue protein sequence, read N- to C-terminus: Capsid scaffolding protein (605 aa).

Catalysis depends on charge relay system residues histidine 48, serine 116, and histidine 139. The segment at 235 to 275 (ASDAPDLQKPDKALQSPPPASTDPDTMLSGNAGEGATACGG) is disordered. The segment at 281-300 (QDLISVPRNTFMTLLQTNLD) is interaction with pAP. Disordered regions lie at residues 403-432 (DYVPAPSRSNKRKRDPEEDEEGGGLFPGED) and 489-588 (PHQS…KSVS). Residues 410–416 (RSNKRKR) carry the Nuclear localization signal motif. The span at 568–579 (ASASGVAQSKEP) shows a compositional bias: polar residues. The interaction with major capsid protein stretch occupies residues 585 to 605 (KSVSAHLKSIFCEELLNKRVA).

The protein belongs to the herpesviridae capsid scaffolding protein family. Homomultimer. Interacts with major capsid protein. In terms of assembly, exists in a monomer-dimer equilibrium with the dimer being the active species. Post-translationally, capsid scaffolding protein is cleaved by assemblin after formation of the spherical procapsid. As a result, the capsid obtains its mature, icosahedral shape. Cleavages occur at two or more sites: release (R-site) and maturation (M-site).

Its subcellular location is the host cytoplasm. It is found in the host nucleus. The enzyme catalyses Cleaves -Ala-|-Ser- and -Ala-|-Ala- bonds in the scaffold protein.. Functionally, acts as a scaffold protein by binding major capsid protein in the cytoplasm, inducing the nuclear localization of both proteins. Multimerizes in the nucleus such as major capsid protein forms the icosahedral T=16 capsid. Autocatalytic cleavage releases the assembly protein, and subsequently abolishes interaction with major capsid protein. Cleavages products are evicted from the capsid before or during DNA packaging. Protease that plays an essential role in virion assembly within the nucleus. Catalyzes the cleavage of the assembly protein after formation of the spherical procapsid. By that cleavage, the capsid matures and gains its icosahedral shape. The cleavage sites seem to include -Ala-Ser-, -Ala-Ala-, as well as Ala-Thr bonds. Assemblin and cleavages products are evicted from the capsid before or during DNA packaging. Its function is as follows. Plays a major role in capsid assembly. Acts as a scaffold protein by binding major capsid protein. Multimerizes in the nucleus such as major capsid protein forms the icosahedral T=16 capsid. Cleaved by assemblin after capsid completion. The cleavages products are evicted from the capsid before or during DNA packaging. The sequence is that of Capsid scaffolding protein from Epstein-Barr virus (strain AG876) (HHV-4).